The following is a 610-amino-acid chain: DNA replication regulator sld2 (610 aa).

Residues 28–42 (WAQKNDGKKPSREAI) show a composition bias toward basic and acidic residues. Disordered regions lie at residues 28–115 (WAQK…AVHE), 127–261 (SPAV…ERSV), and 338–610 (EQGG…RRRR). Polar residues-rich tracts occupy residues 86 to 110 (ETSLPSASTPSKRNRSAATPKSQHY) and 232 to 261 (TKTSTPLNKNTGNSPSKNNLTKTPSGERSV). Composition is skewed to acidic residues over residues 373 to 386 (VPEEENSFEEDEAA) and 414 to 428 (FDDENFYDSQDEEDL). A compositionally biased stretch (basic residues) spans 442–464 (VFKKKGQKRTTRKVNMRPTRTKR). Over residues 470 to 480 (AEEEDDGEEEH) the composition is skewed to acidic residues. Over residues 493-503 (KNLDGDDHHTL) the composition is skewed to basic and acidic residues. The segment covering 514-527 (EFDDGSEGEDEEAE) has biased composition (acidic residues). Residues 544-573 (SAKEKTKKDATTETKKKKGTKEGGDEEPAK) show a composition bias toward basic and acidic residues.

This sequence belongs to the SLD2 family.

The protein localises to the cytoplasm. Its subcellular location is the nucleus. Functionally, has a role in the initiation of DNA replication. Required at S-phase checkpoint. The polypeptide is DNA replication regulator sld2 (drc-4) (Neurospora crassa (strain ATCC 24698 / 74-OR23-1A / CBS 708.71 / DSM 1257 / FGSC 987)).